Consider the following 267-residue polypeptide: NAD kinase 2 (267 aa).

The active-site Proton acceptor is Asp52. NAD(+) is bound by residues 52-53, 124-125, Arg151, Asp153, 164-169, and Ala188; these read DA, NE, and TAYNKS.

This sequence belongs to the NAD kinase family. A divalent metal cation serves as cofactor.

The protein localises to the cytoplasm. The catalysed reaction is NAD(+) + ATP = ADP + NADP(+) + H(+). In terms of biological role, involved in the regulation of the intracellular balance of NAD and NADP, and is a key enzyme in the biosynthesis of NADP. Catalyzes specifically the phosphorylation on 2'-hydroxyl of the adenosine moiety of NAD to yield NADP. This is NAD kinase 2 from Bacillus anthracis.